The primary structure comprises 457 residues: Cysteine--tRNA ligase (457 aa).

Residue C30 coordinates Zn(2+). Residues 32–42 (PTVYAPAHIGN) carry the 'HIGH' region motif. Zn(2+) contacts are provided by C221, H246, and E250. Positions 278–282 (KMSKS) match the 'KMSKS' region motif. K281 provides a ligand contact to ATP.

Belongs to the class-I aminoacyl-tRNA synthetase family. As to quaternary structure, monomer. Zn(2+) serves as cofactor.

The protein resides in the cytoplasm. The catalysed reaction is tRNA(Cys) + L-cysteine + ATP = L-cysteinyl-tRNA(Cys) + AMP + diphosphate. This chain is Cysteine--tRNA ligase, found in Opitutus terrae (strain DSM 11246 / JCM 15787 / PB90-1).